We begin with the raw amino-acid sequence, 568 residues long: Fumarate hydratase 2 (568 aa).

C133 is a binding site for [4Fe-4S] cluster. Residues 134–135, R173, G216, and 219–225 each bind (S)-malate; these read QD and NKAYLYQ. Residues C252 and C346 each contribute to the [4Fe-4S] cluster site. (S)-malate contacts are provided by residues R421, 467–471, and K491; that span reads TTAGR.

This sequence belongs to the class-I fumarase family. As to quaternary structure, homodimer. [4Fe-4S] cluster serves as cofactor.

The protein localises to the cytoplasm. The protein resides in the cytosol. It carries out the reaction (S)-malate = fumarate + H2O. With respect to regulation, specifically and competitively inhibited by 2-thiomalate, which coordinates with the catalytic [4Fe-4S] cluster. Weakly inhibited by malonate. Functionally, cytosolic fumarate hydratase that catalyzes the reversible hydration of fumarate to (S)-malate. The protein is Fumarate hydratase 2 of Leishmania major.